A 154-amino-acid chain; its full sequence is Aspartate carbamoyltransferase regulatory chain (154 aa).

Residues C109, C114, C138, and C141 each coordinate Zn(2+).

The protein belongs to the PyrI family. In terms of assembly, contains catalytic and regulatory chains. Requires Zn(2+) as cofactor.

In terms of biological role, involved in allosteric regulation of aspartate carbamoyltransferase. The chain is Aspartate carbamoyltransferase regulatory chain from Aliivibrio fischeri (strain ATCC 700601 / ES114) (Vibrio fischeri).